Here is a 152-residue protein sequence, read N- to C-terminus: Nucleoside diphosphate kinase (152 aa).

ATP contacts are provided by lysine 11, phenylalanine 59, arginine 87, threonine 93, arginine 104, and asparagine 114. Residue histidine 117 is the Pros-phosphohistidine intermediate of the active site.

This sequence belongs to the NDK family. In terms of assembly, homotetramer. The cofactor is Mg(2+).

The protein resides in the cytoplasm. It carries out the reaction a 2'-deoxyribonucleoside 5'-diphosphate + ATP = a 2'-deoxyribonucleoside 5'-triphosphate + ADP. It catalyses the reaction a ribonucleoside 5'-diphosphate + ATP = a ribonucleoside 5'-triphosphate + ADP. Its function is as follows. Major role in the synthesis of nucleoside triphosphates other than ATP. The ATP gamma phosphate is transferred to the NDP beta phosphate via a ping-pong mechanism, using a phosphorylated active-site intermediate. The protein is Nucleoside diphosphate kinase of Prochlorococcus marinus (strain MIT 9215).